The primary structure comprises 276 residues: Tryptophan synthase alpha chain (276 aa).

Active-site proton acceptor residues include Glu-49 and Asp-60.

The protein belongs to the TrpA family. Tetramer of two alpha and two beta chains.

It carries out the reaction (1S,2R)-1-C-(indol-3-yl)glycerol 3-phosphate + L-serine = D-glyceraldehyde 3-phosphate + L-tryptophan + H2O. It participates in amino-acid biosynthesis; L-tryptophan biosynthesis; L-tryptophan from chorismate: step 5/5. Functionally, the alpha subunit is responsible for the aldol cleavage of indoleglycerol phosphate to indole and glyceraldehyde 3-phosphate. In Corynebacterium aurimucosum (strain ATCC 700975 / DSM 44827 / CIP 107346 / CN-1) (Corynebacterium nigricans), this protein is Tryptophan synthase alpha chain.